The sequence spans 321 residues: Glucokinase (321 aa).

8 to 13 lines the ATP pocket; the sequence is ADIGGT.

This sequence belongs to the bacterial glucokinase family.

It localises to the cytoplasm. The catalysed reaction is D-glucose + ATP = D-glucose 6-phosphate + ADP + H(+). The sequence is that of Glucokinase from Photorhabdus laumondii subsp. laumondii (strain DSM 15139 / CIP 105565 / TT01) (Photorhabdus luminescens subsp. laumondii).